We begin with the raw amino-acid sequence, 489 residues long: Tandem C2 domains nuclear protein (489 aa).

Phosphoserine is present on residues serine 82, serine 155, serine 167, serine 173, and serine 210. The disordered stretch occupies residues 189–214 (DSFSSVPSSSSSRKNSQGSNRSLDTI). Residues 191-210 (FSSVPSSSSSRKNSQGSNRS) are compositionally biased toward low complexity. Threonine 213 and threonine 215 each carry phosphothreonine. At serine 217 the chain carries Phosphoserine. 2 C2 domains span residues 222 to 341 (DLGR…SLEI) and 343 to 470 (APSK…NQWK). The Nuclear localization signal signature appears at 446–448 (RRK).

The protein localises to the nucleus. This is Tandem C2 domains nuclear protein (Tc2n) from Mus musculus (Mouse).